The following is a 205-amino-acid chain: Probable GTP-binding protein EngB (205 aa).

Positions 21-196 constitute an EngB-type G domain; the sequence is QVPEVAFAGR…VHEVSKCVKE (176 aa). GTP is bound by residues 29–36, 56–60, 74–77, 141–144, and 172–177; these read GRSNVGKS, GSTRQ, DLPG, TKID, and IIGTSS. Serine 36 and threonine 58 together coordinate Mg(2+).

It belongs to the TRAFAC class TrmE-Era-EngA-EngB-Septin-like GTPase superfamily. EngB GTPase family. Requires Mg(2+) as cofactor.

Necessary for normal cell division and for the maintenance of normal septation. In Anaplasma marginale (strain Florida), this protein is Probable GTP-binding protein EngB.